We begin with the raw amino-acid sequence, 471 residues long: UDP-N-acetylmuramate--L-alanine ligase (471 aa).

Residue 114-120 (GTHGKTT) participates in ATP binding.

The protein belongs to the MurCDEF family.

It is found in the cytoplasm. The enzyme catalyses UDP-N-acetyl-alpha-D-muramate + L-alanine + ATP = UDP-N-acetyl-alpha-D-muramoyl-L-alanine + ADP + phosphate + H(+). The protein operates within cell wall biogenesis; peptidoglycan biosynthesis. In terms of biological role, cell wall formation. This is UDP-N-acetylmuramate--L-alanine ligase from Rhizobium johnstonii (strain DSM 114642 / LMG 32736 / 3841) (Rhizobium leguminosarum bv. viciae).